Consider the following 377-residue polypeptide: MLKRASFVEVDTASLRHNFSAVKSIVPKDAHIMAVVKANAYGAGAIKASEIFLQEGANYLGVAALDEALELRSHFPKTPILILGYSPNTNASMLIDNDLSAMIFSLEQAEVFSQMALKSQKRLKIHLKIDTGMHRLGLEPNFKSIEIIKKIRALKGLEIEGIFTHLSNADAKIKTHAKNQMKAFNAFLEQLLDQKIEFQYRHAYNSAGILSLCNGNENRLLNLYRPGIMLYGFYPSNEMKESCPTILKNVISLKAQIVQIRSVKKGEFIGYGEHFYTNEETLVGVLALGYADGLMRALGNRIQVAINNQLAPLIGKVCMDQCFVKLNDIQAKEGDEVILFGDKSARANDASEIAALLNTIAYETISTLSKRLERVYI.

Residue Lys-37 is the Proton acceptor; specific for D-alanine of the active site. Residue Lys-37 is modified to N6-(pyridoxal phosphate)lysine. Arg-135 contacts substrate. Tyr-271 serves as the catalytic Proton acceptor; specific for L-alanine. Met-319 lines the substrate pocket.

Belongs to the alanine racemase family. Pyridoxal 5'-phosphate is required as a cofactor.

It carries out the reaction L-alanine = D-alanine. It participates in amino-acid biosynthesis; D-alanine biosynthesis; D-alanine from L-alanine: step 1/1. Its function is as follows. Catalyzes the interconversion of L-alanine and D-alanine. May also act on other amino acids. This chain is Alanine racemase (alr), found in Helicobacter pylori (strain G27).